Consider the following 736-residue polypeptide: Catalase-peroxidase 2 (736 aa).

The first 23 residues, 1-23 (MIKKTLPVLILLALSGSFSTAVA), serve as a signal peptide directing secretion. A cross-link (tryptophyl-tyrosyl-methioninium (Trp-Tyr) (with M-249)) is located at residues 102-223 (WHGAGTYRTY…LAATQMGLIY (122 aa)). Catalysis depends on His103, which acts as the Proton acceptor. The tryptophyl-tyrosyl-methioninium (Tyr-Met) (with W-102) cross-link spans 223–249 (YVNPEGPGGKPDPLASAKDIREAFSRM). His264 is a heme b binding site.

It belongs to the peroxidase family. Peroxidase/catalase subfamily. In terms of assembly, homodimer or homotetramer. The cofactor is heme b. Formation of the three residue Trp-Tyr-Met cross-link is important for the catalase, but not the peroxidase activity of the enzyme.

The protein resides in the periplasm. It catalyses the reaction H2O2 + AH2 = A + 2 H2O. The catalysed reaction is 2 H2O2 = O2 + 2 H2O. Its function is as follows. Bifunctional enzyme with both catalase and broad-spectrum peroxidase activity. The sequence is that of Catalase-peroxidase 2 from Escherichia coli O157:H7.